The sequence spans 662 residues: Transketolase (662 aa).

Histidine 28 is a substrate binding site. Residues histidine 68 and 115–117 (GPL) each bind thiamine diphosphate. Aspartate 156 is a binding site for Mg(2+). Thiamine diphosphate-binding residues include glycine 157 and asparagine 186. Residues asparagine 186 and isoleucine 188 each coordinate Mg(2+). Substrate-binding residues include histidine 261, arginine 356, and serine 383. Histidine 261 contacts thiamine diphosphate. Residue glutamate 410 is the Proton donor of the active site. Phenylalanine 436 lines the thiamine diphosphate pocket. Substrate-binding residues include histidine 460, aspartate 468, and arginine 519.

The protein belongs to the transketolase family. In terms of assembly, homodimer. Mg(2+) is required as a cofactor. Requires Ca(2+) as cofactor. The cofactor is Mn(2+). It depends on Co(2+) as a cofactor. Thiamine diphosphate serves as cofactor.

It carries out the reaction D-sedoheptulose 7-phosphate + D-glyceraldehyde 3-phosphate = aldehydo-D-ribose 5-phosphate + D-xylulose 5-phosphate. Its pathway is carbohydrate biosynthesis; Calvin cycle. The protein operates within carbohydrate degradation; pentose phosphate pathway. Catalyzes the transfer of a two-carbon ketol group from a ketose donor to an aldose acceptor, via a covalent intermediate with the cofactor thiamine pyrophosphate. This Staphylococcus aureus (strain COL) protein is Transketolase (tkt).